Here is a 2569-residue protein sequence, read N- to C-terminus: Highly reducing polyketide synthase pks5 (2569 aa).

Residues 1–25 (MVVKFANGVRNRGNGDEGQRGTQRP) form a disordered region. A Ketosynthase family 3 (KS3) domain is found at 27–452 (STPIAIVGMS…GTNVHVIMEA (426 aa)). Active-site for beta-ketoacyl synthase activity residues include C200, H335, and H375. Positions 572–892 (IFNGQGAQWY…PYLSCLRRNI (321 aa)) are malonyl-CoA:ACP transacylase (MAT) domain. An N-terminal hotdog fold region spans residues 960 to 1097 (HELLGSSVPG…GYVSAEDSSK (138 aa)). A dehydratase (DH) domain region spans residues 960-1268 (HELLGSSVPG…LRLQKIQAED (309 aa)). Residues 960-1270 (HELLGSSVPG…LQKIQAEDDN (311 aa)) enclose the PKS/mFAS DH domain. Catalysis depends on H992, which acts as the Proton acceptor; for dehydratase activity. Residues 1117–1270 (RVRHVRPDAM…LQKIQAEDDN (154 aa)) form a C-terminal hotdog fold region. Residue D1179 is the Proton donor; for dehydratase activity of the active site. A methyltransferase (CMet) domain region spans residues 1457 to 1567 (LEVGAGTGGA…RKLLKPKGKL (111 aa)). The enoyl reductase (ER) domain stretch occupies residues 1855–2170 (DLLNKIEFLE…SGTHMGKIVL (316 aa)). Residues 2195–2371 (THLIVGGLRG…AISINLGPVD (177 aa)) are ketoreductase (KR) domain. Residues 2485-2562 (AARKLVSELI…DFAALVASRS (78 aa)) form the Carrier domain. S2522 carries the post-translational modification O-(pantetheine 4'-phosphoryl)serine.

In terms of biological role, highly reducing polyketide synthase; part of the gene cluster that mediates the biosynthesis of abscisic acid (ABA), a phytohormone that acts antagonistically toward salicylic acid (SA), jasmonic acid (JA) and ethylene (ETH) signaling, to impede plant defense responses. The first step of the pathway catalyzes the reaction from farnesyl diphosphate to alpha-ionylideneethane performed by the alpha-ionylideneethane synthase abl3 via a three-step reaction mechanism involving 2 neutral intermediates, beta-farnesene and allofarnesene. The cytochrome P450 monooxygenase abl1 might then be involved in the conversion of alpha-ionylideneethane to alpha-ionylideneacetic acid. Alpha-ionylideneacetic acid is further converted to abscisic acid in 2 steps involving the cytochrome P450 monooxygenase abl2 and the short-chain dehydrogenase/reductase abl4, via the intermediates 1'-deoxy-ABA or 1',4'-trans-diol-ABA, depending on the order of action of these 2 enzymes. Abl2 is responsible for the hydroxylation of carbon atom C-1' and abl4 might be involved in the oxidation of the C-4' carbon atom. Pks5 is clearly not involved in the production of ABA. Nonetheless, the possibility cannot be excluded that pks5 may modify ABA into another compound. It also cannot be excluded the possibility that pks5 also has a function completely independent of ABA synthesis. Pks5 is not required for pathogenicity on B.napus cotyledon. The sequence is that of Highly reducing polyketide synthase pks5 from Leptosphaeria maculans (strain JN3 / isolate v23.1.3 / race Av1-4-5-6-7-8) (Blackleg fungus).